A 522-amino-acid chain; its full sequence is Putative malate dehydrogenase 1B (522 aa).

The tract at residues 495–522 (EETEKSSSEDTPEAAAAAVSTGDETVPS) is disordered.

The protein belongs to the LDH/MDH superfamily. MDH type 2 family.

The protein is Putative malate dehydrogenase 1B (MDH1B) of Branchiostoma floridae (Florida lancelet).